A 296-amino-acid polypeptide reads, in one-letter code: Glycine--tRNA ligase alpha subunit (296 aa).

Belongs to the class-II aminoacyl-tRNA synthetase family. Tetramer of two alpha and two beta subunits.

The protein resides in the cytoplasm. The enzyme catalyses tRNA(Gly) + glycine + ATP = glycyl-tRNA(Gly) + AMP + diphosphate. The protein is Glycine--tRNA ligase alpha subunit of Parasynechococcus marenigrum (strain WH8102).